The sequence spans 588 residues: Calicin (588 aa).

Residues 28 to 98 enclose the BTB domain; it reads WDIALTVDHH…FYSGKVVISE (71 aa). Position 149 is a phosphoserine (S149). Kelch repeat units follow at residues 280-327, 328-375, 377-423, 425-475, 476-525, and 526-580; these read SVVI…SAGR, YIYI…TCGG, VYSV…TRGD, NLYI…SFHQ, DNIL…VGDN, and KVFV…LAKL.

Interacts with CYLC1; the interaction may be relevant for proper acrosome attachment to the nuclear envelope. In terms of tissue distribution, expressed in testis and in spermatozoa (at protein level).

It is found in the cytoplasm. Its subcellular location is the cytoskeleton. The protein resides in the perinuclear theca. It localises to the calyx. In terms of biological role, required for both nuclear and acrosomal shaping during spermiogenesis. The protein is Calicin (CCIN) of Bos taurus (Bovine).